The following is a 308-amino-acid chain: Glucan 1,3-beta-glucosidase BGL2 (308 aa).

The signal sequence occupies residues 1–18; it reads MQIKFLTTLATVLTSVAA. Glutamate 119 functions as the Proton donor in the catalytic mechanism. Asparagine 197 is a glycosylation site (N-linked (GlcNAc...) asparagine). Glutamate 228 (nucleophile) is an active-site residue.

The protein belongs to the glycosyl hydrolase 17 family.

Its subcellular location is the secreted. It is found in the cell wall. It localises to the cytoplasm. The enzyme catalyses Successive hydrolysis of beta-D-glucose units from the non-reducing ends of (1-&gt;3)-beta-D-glucans, releasing alpha-glucose.. Functionally, cell wall glucan 1,3-beta-glucosidase involved in cell wall biosynthesis and virulence. Crucial for delivery of beta-1,3-glucan to the biofilm matrix and for accumulation of mature matrix biomass. Plays a role as a major antigen in human systemic candidiasis patients. The chain is Glucan 1,3-beta-glucosidase BGL2 (BGL2) from Candida albicans (strain SC5314 / ATCC MYA-2876) (Yeast).